A 294-amino-acid polypeptide reads, in one-letter code: Homoserine kinase (294 aa).

84–94 is a binding site for ATP; the sequence is PFSRGLGSSSA.

It belongs to the GHMP kinase family. Homoserine kinase subfamily.

The protein resides in the cytoplasm. The catalysed reaction is L-homoserine + ATP = O-phospho-L-homoserine + ADP + H(+). It functions in the pathway amino-acid biosynthesis; L-threonine biosynthesis; L-threonine from L-aspartate: step 4/5. Its function is as follows. Catalyzes the ATP-dependent phosphorylation of L-homoserine to L-homoserine phosphate. The protein is Homoserine kinase of Campylobacter concisus (strain 13826).